The chain runs to 627 residues: (-)-beta-pinene synthase 2, chloroplastic (627 aa).

A chloroplast-targeting transit peptide spans 1–51 (MDLISVLPSASKSCVCLHKPLSSSTHKLKPFCRKIRILGMPRPRKSVLMVS). 3 residues coordinate Mg(2+): D378, D382, and D530. The DDXXD motif signature appears at 378–382 (DDMYD).

It belongs to the terpene synthase family. Tpsd subfamily. Mg(2+) is required as a cofactor. Mn(2+) serves as cofactor.

It localises to the plastid. The protein localises to the chloroplast. It carries out the reaction (2E)-geranyl diphosphate = (1S,5S)-beta-pinene + diphosphate. The enzyme catalyses (2E)-geranyl diphosphate = (1S,5S)-alpha-pinene + diphosphate. Its pathway is terpene metabolism; oleoresin biosynthesis. It functions in the pathway secondary metabolite biosynthesis; terpenoid biosynthesis. In terms of biological role, monoterpene synthase (TPS) involved in the biosynthesis of monoterpene natural products included in conifer oleoresin secretions and volatile emissions; these compounds contribute to biotic and abiotic stress defense against herbivores and pathogens. Catalyzes the conversion of (2E)-geranyl diphosphate (GPP) to (-)-beta-pinene and, to a lower extent, to (-)-alpha-pinene. This is (-)-beta-pinene synthase 2, chloroplastic from Pinus banksiana (Jack pine).